We begin with the raw amino-acid sequence, 195 residues long: Recombination protein RecR (195 aa).

The segment at 56 to 71 (CRQCHSFSDDDICPIC) adopts a C4-type zinc-finger fold. A Toprim domain is found at 79–174 (SVLCVVETAA…KVTRIAQGIP (96 aa)).

Belongs to the RecR family.

In terms of biological role, may play a role in DNA repair. It seems to be involved in an RecBC-independent recombinational process of DNA repair. It may act with RecF and RecO. The protein is Recombination protein RecR of Psychrobacter sp. (strain PRwf-1).